Here is a 495-residue protein sequence, read N- to C-terminus: Probable cytosol aminopeptidase (495 aa).

Mn(2+) contacts are provided by Lys-267 and Asp-272. Lys-279 is a catalytic residue. Asp-290, Asp-349, and Glu-351 together coordinate Mn(2+). Residue Arg-353 is part of the active site.

The protein belongs to the peptidase M17 family. The cofactor is Mn(2+).

The protein resides in the cytoplasm. It catalyses the reaction Release of an N-terminal amino acid, Xaa-|-Yaa-, in which Xaa is preferably Leu, but may be other amino acids including Pro although not Arg or Lys, and Yaa may be Pro. Amino acid amides and methyl esters are also readily hydrolyzed, but rates on arylamides are exceedingly low.. The enzyme catalyses Release of an N-terminal amino acid, preferentially leucine, but not glutamic or aspartic acids.. Its function is as follows. Presumably involved in the processing and regular turnover of intracellular proteins. Catalyzes the removal of unsubstituted N-terminal amino acids from various peptides. The sequence is that of Probable cytosol aminopeptidase from Histophilus somni (strain 129Pt) (Haemophilus somnus).